Reading from the N-terminus, the 546-residue chain is Oncoprotein-induced transcript 3 protein (546 aa).

Positions 1 to 16 (MPLSLLLACLFTTVTL) are cleaved as a signal peptide. Residues Asn-89 and Asn-116 are each glycosylated (N-linked (GlcNAc...) asparagine). The EGF-like; calcium-binding domain occupies 182 to 222 (DENECEHNNGGCSEICVNLKNSHRCACGVGRVLRSDGKTCE). 3 disulfides stabilise this stretch: Cys-186–Cys-197, Cys-193–Cys-206, and Cys-208–Cys-221. The 256-residue stretch at 261 to 516 (TCQVPVLCKS…SRCAQGCHRR (256 aa)) folds into the ZP domain. A glycan (N-linked (GlcNAc...) asparagine) is linked at Asn-299. The segment at 524–546 (DEDSAGLQSQTLTGGPISIDWEE) is disordered.

Its subcellular location is the nucleus envelope. May be involved in hepatocellular function and development. The chain is Oncoprotein-induced transcript 3 protein (Oit3) from Rattus norvegicus (Rat).